Consider the following 516-residue polypeptide: MGDPSKQDILTIFKRLRSVPTNKVCFDCGAKNPSWASITYGVFLCIDCSGSHRSLGVHLSFIRSTELDSNWSWFQLRCMQVGGNANASSFFHQHGCSTSDTNAKYNSRAAQLYREKIKSLASQATRKHGTDLWLDSCVVPPLSPPPKEEDFFASHVSPEVSDTAWASAIAEPSSLTSRPVETTLENNEGGQEQGPSVEGLNVPSKAALEVSSIIKKKPNQAKKGLGAKKGSLGAQKLANTCFNEIEKQAQAADKMKEQEDLAKAAPKEESIVSSLRLAYKDLEIQMKKDEKLNISGKKNVDSDRLGMGFGNCRSGISHSVTSDMQTIEQESPIMAKPRKKYNDDSDDSYFTSSSRYFDEAVELRSSSFSSWDDSSDSYWKKETSKDTETILKTTGYSDRPTARRKPDYEPVENTDEAQKKFGNVKAISSDMYFGRQAQADYETRARLERLSASSSISSADLFEEQRKQAAGNYSLSNVLPSAPNMAQFKQGVRSVAGKLSVFANGVVTSIQDRYGS.

The Arf-GAP domain occupies 10–126 (LTIFKRLRSV…IKSLASQATR (117 aa)). The segment at 25 to 48 (CFDCGAKNPSWASITYGVFLCIDC) adopts a C4-type zinc-finger fold. Positions 170–199 (AEPSSLTSRPVETTLENNEGGQEQGPSVEG) are disordered. Positions 173 to 194 (SSLTSRPVETTLENNEGGQEQG) are enriched in polar residues. A Phosphoserine modification is found at Ser-231. Residues 243–264 (NEIEKQAQAADKMKEQEDLAKA) adopt a coiled-coil conformation. 4 positions are modified to phosphoserine: Ser-270, Ser-274, Ser-331, and Ser-370. The disordered stretch occupies residues 392–414 (KTTGYSDRPTARRKPDYEPVENT). Phosphoserine occurs at positions 428, 451, 453, 455, 457, and 458.

Its subcellular location is the cytoplasm. It is found in the golgi apparatus membrane. With respect to regulation, GAP activity stimulated by phosphatidylinositol 4,5-bisphosphate (PIP2). Its function is as follows. GTPase-activating protein (GAP) for ADP ribosylation factor 1 (ARF1). Hydrolysis of ARF1-bound GTP may lead to dissociation of coatomer from Golgi-derived membranes to allow fusion with target membranes. This is ADP-ribosylation factor GTPase-activating protein 3 from Macaca fascicularis (Crab-eating macaque).